The following is a 363-amino-acid chain: Aminomethyltransferase (363 aa).

It belongs to the GcvT family. As to quaternary structure, the glycine cleavage system is composed of four proteins: P, T, L and H.

The catalysed reaction is N(6)-[(R)-S(8)-aminomethyldihydrolipoyl]-L-lysyl-[protein] + (6S)-5,6,7,8-tetrahydrofolate = N(6)-[(R)-dihydrolipoyl]-L-lysyl-[protein] + (6R)-5,10-methylene-5,6,7,8-tetrahydrofolate + NH4(+). Functionally, the glycine cleavage system catalyzes the degradation of glycine. This is Aminomethyltransferase from Thermosipho melanesiensis (strain DSM 12029 / CIP 104789 / BI429).